A 182-amino-acid chain; its full sequence is Peptidyl-tRNA hydrolase (182 aa).

Tyr-14 contributes to the tRNA binding site. The active-site Proton acceptor is the His-19. TRNA-binding residues include Phe-64, Asn-66, and Asn-112.

The protein belongs to the PTH family. Monomer.

Its subcellular location is the cytoplasm. It catalyses the reaction an N-acyl-L-alpha-aminoacyl-tRNA + H2O = an N-acyl-L-amino acid + a tRNA + H(+). Its function is as follows. Hydrolyzes ribosome-free peptidyl-tRNAs (with 1 or more amino acids incorporated), which drop off the ribosome during protein synthesis, or as a result of ribosome stalling. Catalyzes the release of premature peptidyl moieties from peptidyl-tRNA molecules trapped in stalled 50S ribosomal subunits, and thus maintains levels of free tRNAs and 50S ribosomes. The chain is Peptidyl-tRNA hydrolase from Wolbachia pipientis wMel.